The primary structure comprises 248 residues: Coproheme decarboxylase (248 aa).

Residues Arg130, 144-148 (YPMDK), His171, Gln184, and Ser222 contribute to the Fe-coproporphyrin III site. Residue Tyr144 is part of the active site.

It belongs to the ChdC family. Type 1 subfamily. Homopentamer. It depends on Fe-coproporphyrin III as a cofactor.

It carries out the reaction Fe-coproporphyrin III + 2 H2O2 + 2 H(+) = heme b + 2 CO2 + 4 H2O. It catalyses the reaction Fe-coproporphyrin III + H2O2 + H(+) = harderoheme III + CO2 + 2 H2O. The catalysed reaction is harderoheme III + H2O2 + H(+) = heme b + CO2 + 2 H2O. Its pathway is porphyrin-containing compound metabolism; protoheme biosynthesis. Its function is as follows. Involved in coproporphyrin-dependent heme b biosynthesis. Catalyzes the decarboxylation of Fe-coproporphyrin III (coproheme) to heme b (protoheme IX), the last step of the pathway. The reaction occurs in a stepwise manner with a three-propionate intermediate. This is Coproheme decarboxylase from Geobacillus kaustophilus (strain HTA426).